We begin with the raw amino-acid sequence, 108 residues long: MWVTCHLLKREKDEMKKKWREWAKEVCQFGKRILCISITDAALVNLEVLEPKNFEPGTLDGAGLFGCWSANGLGIALAYEITNSRFEINSGYTVKVKCLKRFQGEARG.

This is an uncharacterized protein from Schizosaccharomyces pombe (strain 972 / ATCC 24843) (Fission yeast).